A 446-amino-acid polypeptide reads, in one-letter code: Methionine aminopeptidase 2 (446 aa).

Residues 1-85 are disordered; it reads MAGVTEGEDT…KNKKKKKKKI (85 aa). A compositionally biased stretch (basic and acidic residues) spans 8–32; that stretch reads EDTKVIESKINELNIDKPKLEDNNE. The segment covering 42 to 58 has biased composition (acidic residues); the sequence is SGDDDDDDKEEDDDNEI. The span at 73–85 shows a compositional bias: basic residues; that stretch reads KKNKNKKKKKKKI. Position 197 (His-197) interacts with substrate. The a divalent metal cation site is built by Asp-217, Asp-228, and His-299. Residue His-307 participates in substrate binding. A divalent metal cation contacts are provided by Glu-332 and Glu-427.

This sequence belongs to the peptidase M24A family. Methionine aminopeptidase eukaryotic type 2 subfamily. Co(2+) serves as cofactor. Zn(2+) is required as a cofactor. The cofactor is Mn(2+). Requires Fe(2+) as cofactor.

It is found in the cytoplasm. It catalyses the reaction Release of N-terminal amino acids, preferentially methionine, from peptides and arylamides.. Cotranslationally removes the N-terminal methionine from nascent proteins. The N-terminal methionine is often cleaved when the second residue in the primary sequence is small and uncharged (Met-Ala-, Cys, Gly, Pro, Ser, Thr, or Val). The polypeptide is Methionine aminopeptidase 2 (Candida albicans (strain SC5314 / ATCC MYA-2876) (Yeast)).